Consider the following 326-residue polypeptide: L-lactate dehydrogenase (326 aa).

NAD(+) contacts are provided by residues V20, D41, K46, Y71, and 85–86 (GA). Positions 88 and 94 each coordinate substrate. Residues S107, 124–126 (AAN), and S149 contribute to the NAD(+) site. 126–129 (NPVD) is a substrate binding site. 154–157 (DTAR) contacts substrate. Beta-D-fructose 1,6-bisphosphate contacts are provided by residues R159, 171–174 (RSVH), and H174. Catalysis depends on H181, which acts as the Proton acceptor. Phosphotyrosine is present on Y226. Residue T235 participates in substrate binding.

It belongs to the LDH/MDH superfamily. LDH family. As to quaternary structure, homotetramer.

It localises to the cytoplasm. It catalyses the reaction (S)-lactate + NAD(+) = pyruvate + NADH + H(+). The protein operates within fermentation; pyruvate fermentation to lactate; (S)-lactate from pyruvate: step 1/1. With respect to regulation, allosterically activated by fructose 1,6-bisphosphate (FBP) alone under acidic conditions, while it requires additional activation factors such as divalent cations (Mn(2+)) under neutral conditions. Under acidic conditions, Mn(2+) is an inhibitor in the absence of fructose 1,6-bisphosphate (FBP). In case of L.casei, L-LDH binds four fructose 1,6-bisphosphate (FBP) molecules per tetramer, while usual allosteric L-LDH binds only two fructose 1,6-bisphosphate (FBP) molecules per tetramer. In terms of biological role, catalyzes the conversion of lactate to pyruvate. The protein is L-lactate dehydrogenase of Lacticaseibacillus casei (Lactobacillus casei).